Consider the following 262-residue polypeptide: MNKFLIIDGLNLVRRIYAAIPDETDMQSLTERVISACTKLLRVHRPTHVAIVWDGHEISWRKQLYPDYKKGRKPMPEPLAQGLVALQDHLTAMHIGSIYAAAEADDVIATLAIKTAKAQGEAIIVSTDKGFSQLNHRHISQWDHFNQQYLDIAALEQKLGVERSQFLDLMALAGDSGNKIPGIAGIGPKSAAELLKTFRSLPTLFSSLSNLGAKQAKKLAEGKEMARLSYKLAQLQTDLPLNINLKDFRVIDSPPEKTINQD.

Asp-105 is a Mg(2+) binding site. In terms of domain architecture, 5'-3' exonuclease spans 162–257 (ERSQFLDLMA…FRVIDSPPEK (96 aa)). K(+)-binding residues include Leu-172, Ala-173, Pro-181, Ile-183, and Ile-186. The tract at residues 185–190 (GIGPKS) is interaction with DNA.

It belongs to the Xni family. The cofactor is Mg(2+). K(+) serves as cofactor.

Its function is as follows. Has flap endonuclease activity. During DNA replication, flap endonucleases cleave the 5'-overhanging flap structure that is generated by displacement synthesis when DNA polymerase encounters the 5'-end of a downstream Okazaki fragment. The polypeptide is Flap endonuclease Xni (Shewanella baltica (strain OS155 / ATCC BAA-1091)).